We begin with the raw amino-acid sequence, 622 residues long: Probable ATP-citrate synthase (622 aa).

ATP is bound by residues 228-248 (ALRY…ELGG) and 279-305 (FPTE…KNKA). Mg(2+) is bound at residue Glu-245. His-287 serves as the catalytic Tele-phosphohistidine intermediate. 306–316 (LREAGAVVPTS) contacts CoA.

In the N-terminal section; belongs to the succinate/malate CoA ligase beta subunit family. This sequence in the C-terminal section; belongs to the succinate/malate CoA ligase alpha subunit family. As to quaternary structure, homotetramer.

The protein resides in the cytoplasm. The catalysed reaction is oxaloacetate + acetyl-CoA + ADP + phosphate = citrate + ATP + CoA. Functionally, catalyzes the cleavage of citrate into oxaloacetate and acetyl-CoA, the latter serving as common substrate in multiple biochemical reactions in protein, carbohydrate and lipid metabolism. This chain is Probable ATP-citrate synthase (acly), found in Dictyostelium discoideum (Social amoeba).